The sequence spans 333 residues: Phosphoribosylformylglycinamidine cyclo-ligase (333 aa).

This sequence belongs to the AIR synthase family.

Its subcellular location is the cytoplasm. It carries out the reaction 2-formamido-N(1)-(5-O-phospho-beta-D-ribosyl)acetamidine + ATP = 5-amino-1-(5-phospho-beta-D-ribosyl)imidazole + ADP + phosphate + H(+). The protein operates within purine metabolism; IMP biosynthesis via de novo pathway; 5-amino-1-(5-phospho-D-ribosyl)imidazole from N(2)-formyl-N(1)-(5-phospho-D-ribosyl)glycinamide: step 2/2. This is Phosphoribosylformylglycinamidine cyclo-ligase from Clostridium perfringens (strain ATCC 13124 / DSM 756 / JCM 1290 / NCIMB 6125 / NCTC 8237 / Type A).